Reading from the N-terminus, the 615-residue chain is Leucine aminopeptidase 2-1 (615 aa).

Residues 137-139 and 261-266 contribute to the substrate site; these read QCQ and PYGGME. Residue histidine 290 coordinates Zn(2+). Glutamate 291 serves as the catalytic Proton acceptor. Positions 294 and 313 each coordinate Zn(2+). Tyrosine 380 functions as the Proton donor in the catalytic mechanism.

It belongs to the peptidase M1 family. Zn(2+) is required as a cofactor.

Its subcellular location is the cytoplasm. It localises to the nucleus. It catalyses the reaction an epoxide + H2O = an ethanediol. Aminopeptidase that preferentially cleaves di- and tripeptides. Also has low epoxide hydrolase activity (in vitro). Can hydrolyze the epoxide leukotriene LTA(4) but it forms preferentially 5,6-dihydroxy-7,9,11,14-eicosatetraenoic acid rather than the cytokine leukotriene B(4) as the product compared to the homologous mammalian enzyme (in vitro). This chain is Leucine aminopeptidase 2-1, found in Meyerozyma guilliermondii (strain ATCC 6260 / CBS 566 / DSM 6381 / JCM 1539 / NBRC 10279 / NRRL Y-324) (Yeast).